The sequence spans 157 residues: Small ribosomal subunit protein uS7 (157 aa).

This sequence belongs to the universal ribosomal protein uS7 family. Part of the 30S ribosomal subunit. Contacts proteins S9 and S11.

In terms of biological role, one of the primary rRNA binding proteins, it binds directly to 16S rRNA where it nucleates assembly of the head domain of the 30S subunit. Is located at the subunit interface close to the decoding center, probably blocks exit of the E-site tRNA. The polypeptide is Small ribosomal subunit protein uS7 (Caldicellulosiruptor saccharolyticus (strain ATCC 43494 / DSM 8903 / Tp8T 6331)).